Reading from the N-terminus, the 546-residue chain is Immunoglobulin-like domain-containing receptor 1 (546 aa).

Residues 1–23 form the signal peptide; that stretch reads MAWPKLPAPWLLLCTWLPAGCLS. An Ig-like V-type domain is found at 24–162; it reads LLVTVQHTER…TSGDPDKEVK (139 aa). The Extracellular portion of the chain corresponds to 24-167; it reads LLVTVQHTER…DKEVKLIVLH (144 aa). A disulfide bond links Cys-45 and Cys-145. The helical transmembrane segment at 168 to 188 threads the bilayer; sequence WLTVIFIILGALLLLLLIGVC. At 189–546 the chain is on the cytoplasmic side; it reads WCQCCPQYCC…SSHSGRSVVI (358 aa). Residues 399-546 are disordered; it reads WSGRHRSSRL…SSHSGRSVVI (148 aa). Basic and acidic residues predominate over residues 442–457; it reads RCQERPRRPSPRESTQ. A compositionally biased stretch (basic residues) spans 458–467; that stretch reads RHGRRRRHRS. Phosphoserine occurs at positions 499 and 501. The segment covering 527-539 has biased composition (basic and acidic residues); it reads GSVERRSEKDSSH.

This sequence belongs to the immunoglobulin superfamily. LISCH7 family. Homooligomer. Interacts with MARVELD2 and OCLN; the interaction is required to recruit MARVELD2 to tricellular contacts. Interacts (via C-terminus) with TRA2A, TRA2B and SRSF1. Interacts with PLSCR1.

The protein localises to the cell membrane. It localises to the cell junction. It is found in the tight junction. Its subcellular location is the nucleus. The protein resides in the cytoplasm. Its function is as follows. Maintains epithelial barrier function by recruiting MARVELD2/tricellulin to tricellular tight junctions (tTJs). Crucial for normal hearing by maintaining the structural and functional integrity of tTJs, which are critical for the survival of auditory neurosensory HCs. Mediates fatty acids and lipoproteins-stimulated CCK/cholecystokinin secretion in the small intestine. In the inner ear, may regulate alternative pre-mRNA splicing via binding to TRA2A, TRA2B and SRSF1. In Pongo abelii (Sumatran orangutan), this protein is Immunoglobulin-like domain-containing receptor 1 (ILDR1).